Here is a 349-residue protein sequence, read N- to C-terminus: Phenylalanine--tRNA ligase alpha subunit (349 aa).

E261 serves as a coordination point for Mg(2+).

Belongs to the class-II aminoacyl-tRNA synthetase family. Phe-tRNA synthetase alpha subunit type 1 subfamily. In terms of assembly, tetramer of two alpha and two beta subunits. Mg(2+) serves as cofactor.

The protein localises to the cytoplasm. It catalyses the reaction tRNA(Phe) + L-phenylalanine + ATP = L-phenylalanyl-tRNA(Phe) + AMP + diphosphate + H(+). The protein is Phenylalanine--tRNA ligase alpha subunit of Leuconostoc citreum (strain KM20).